Here is a 768-residue protein sequence, read N- to C-terminus: Gephyrin (768 aa).

Residues 14–166 are MPT Mo-transferase; sequence QIRVGVLTVS…LPGSKKGSQE (153 aa). The tract at residues 153–348 is interaction with GABARAP; it reads LIINLPGSKK…VDITKVARRH (196 aa). 2 disordered regions span residues 194–245 and 273–316; these read DELE…DSSS and TASL…ASRV. Over residues 200 to 212 the composition is skewed to pro residues; sequence PSPPPPLSPPPTT. Residues Ser201 and Ser207 each carry the phosphoserine modification. A Phosphothreonine modification is found at Thr211. Ser213 carries the phosphoserine modification. Cys225 is lipidated: S-palmitoyl cysteine. Over residues 274-299 the composition is skewed to polar residues; the sequence is ASLSTTPSESPRAQATSRLSTASCPT. Ser275 carries the phosphoserine modification. 2 positions are modified to phosphothreonine: Thr278 and Thr279. Residues Ser281 and Ser283 each carry the phosphoserine modification. Residue Cys297 is the site of S-palmitoyl cysteine attachment. The interval 326–768 is MPT adenylyltransferase; the sequence is SSKENILRAS…VVDVMVIGRL (443 aa). A Phosphoserine modification is found at Ser337.

In the N-terminal section; belongs to the MoaB/Mog family. The protein in the C-terminal section; belongs to the MoeA family. As to quaternary structure, homotrimer, homodimer and homooligomer. Interacts with SRGAP2 (via SH3 domain). Interacts with GLRB. Interacts with GABARAP. Interacts with GABRA3. GABRA3 and GLRB occupy overlapping binding sites. Interacts with ARHGAP32; IQSEC3, INSYN1 and INSYN2A. The cofactor is Mg(2+). In terms of processing, phosphorylated. Palmitoylated. Palmitoylation is stimulated by GABA type A receptors activity. Palmitoylation by ZDHHC12 regulates clustering at synapses. Expressed in tissues including spinal cord, brain, liver, kidney and lung.

It localises to the postsynaptic cell membrane. Its subcellular location is the cell membrane. It is found in the cytoplasm. The protein localises to the cytosol. The protein resides in the cytoskeleton. It localises to the cell projection. Its subcellular location is the dendrite. It is found in the postsynaptic density. The catalysed reaction is molybdopterin + ATP + H(+) = adenylyl-molybdopterin + diphosphate. It carries out the reaction adenylyl-molybdopterin + molybdate = Mo-molybdopterin + AMP + H(+). It functions in the pathway cofactor biosynthesis; molybdopterin biosynthesis. Inhibited by copper and tungsten. Functionally, microtubule-associated protein involved in membrane protein-cytoskeleton interactions. It is thought to anchor the inhibitory glycine receptor (GLYR) to subsynaptic microtubules. Acts as a major instructive molecule at inhibitory synapses, where it also clusters GABA type A receptors. Its function is as follows. Also has a catalytic activity and catalyzes two steps in the biosynthesis of the molybdenum cofactor. In the first step, molybdopterin is adenylated. Subsequently, molybdate is inserted into adenylated molybdopterin and AMP is released. The polypeptide is Gephyrin (Gphn) (Rattus norvegicus (Rat)).